The sequence spans 328 residues: Endochitinase (328 aa).

An N-terminal signal peptide occupies residues 1-27; sequence MKKNRMMMMIWSVGVVWMLLLVGGSYG. In terms of domain architecture, Chitin-binding type-1 spans 28-68; it reads EQCGRQAGGALCPGGNCCSQFGWCGSTTDYCGPGCQSQCGG. Disulfide bonds link Cys30/Cys45, Cys39/Cys51, Cys44/Cys58, Cys62/Cys66, Cys97/Cys159, Cys170/Cys178, and Cys277/Cys309. The active-site Proton donor is the Glu141. Residues 318–328 constitute a propeptide, removed in mature form; sequence SLLLSDLVTSQ.

The protein belongs to the glycosyl hydrolase 19 family. Chitinase class I subfamily.

It localises to the vacuole. It catalyses the reaction Random endo-hydrolysis of N-acetyl-beta-D-glucosaminide (1-&gt;4)-beta-linkages in chitin and chitodextrins.. Functionally, defense against chitin-containing fungal pathogens. In Phaseolus vulgaris (Kidney bean), this protein is Endochitinase.